The primary structure comprises 355 residues: Probable sugar phosphate/phosphate translocator At3g10290 (355 aa).

Positions 19-51 (QKKQPNLSISSTTKMNKKNPDQKSDMSSSSSSP) are disordered. The span at 22–32 (QPNLSISSTTK) shows a compositional bias: polar residues. Helical transmembrane passes span 55-75 (TLFISSLIILWYTSNIGVLLL), 89-109 (IFLTMCHMSACAILSYVSIVF), 124-144 (FLKVATLSIVFCASVVGGNIS), 150-170 (VSFNQAVGATTPFFTALFAYI), 177-197 (AWVTYGALVPVVTGVVIASGG), 198-218 (EPGFHWFGFIMCISATAARAF), 239-259 (LMLYMSPIAVIALLPVTIFME), 277-297 (YILLLVNSVMAYSANLLNFLV), 305-325 (TLQVLGNAKGAVAVVISILLF), and 328-348 (PVTVMGIGGYSITVLGVVAYG).

Belongs to the TPT transporter family. TPT (TC 2.A.7.9) subfamily.

Its subcellular location is the membrane. This Arabidopsis thaliana (Mouse-ear cress) protein is Probable sugar phosphate/phosphate translocator At3g10290.